The primary structure comprises 237 residues: Class B acid phosphatase (237 aa).

Residues 1 to 23 form the signal peptide; the sequence is MRKVTLVFSAIAFAFSLNGVVQA. The Nucleophile role is filled by Asp-69. Residues Asp-69 and Asp-71 each coordinate Mg(2+). Asp-71 acts as the Proton donor in catalysis. Substrate-binding positions include 137–138 and Lys-177; that span reads TG. Asp-192 provides a ligand contact to Mg(2+).

It belongs to the class B bacterial acid phosphatase family. As to quaternary structure, homotetramer. Mg(2+) serves as cofactor.

It localises to the periplasm. It carries out the reaction a phosphate monoester + H2O = an alcohol + phosphate. Functionally, dephosphorylates several organic phosphate monoesters. Also has a phosphotransferase activity catalyzing the transfer of low-energy phosphate groups from organic phosphate monoesters to free hydroxyl groups of various organic compounds. This Xenorhabdus bovienii (strain SS-2004) (Xenorhabdus nematophila subsp. bovienii) protein is Class B acid phosphatase.